Here is a 269-residue protein sequence, read N- to C-terminus: Tryptophan synthase alpha chain (269 aa).

Residues E49 and D60 each act as proton acceptor in the active site.

It belongs to the TrpA family. In terms of assembly, tetramer of two alpha and two beta chains.

The enzyme catalyses (1S,2R)-1-C-(indol-3-yl)glycerol 3-phosphate + L-serine = D-glyceraldehyde 3-phosphate + L-tryptophan + H2O. The protein operates within amino-acid biosynthesis; L-tryptophan biosynthesis; L-tryptophan from chorismate: step 5/5. Its function is as follows. The alpha subunit is responsible for the aldol cleavage of indoleglycerol phosphate to indole and glyceraldehyde 3-phosphate. The chain is Tryptophan synthase alpha chain from Ectopseudomonas mendocina (strain ymp) (Pseudomonas mendocina).